The following is a 449-amino-acid chain: MHRMFGTDGVRGIANKELTPELAYKLGKAGAYVLTGRCHKPKILVGMDTRISGDMLENALVSGILSIGAEAICVGIVPTPAVAYLTRKYNADAGVVISASHNPVEYNGIKFFNGKGYKLSDELEDKIQYVIESNFKDVSIPIGSKVGRKIMETGEARKAYIEFAKSTIDTDLKDLKVVLDCANGASYVTSVKAFQELGAKVKVINNEPDGININHNCGSTHPENLMKTVVEEGYDMGLAFDGDADRCLAIDEKGNLINGDFIMAIIAKHLKNQGKLYKNVVVSTVMSNVGFDIALKEEGINTIKTQVGDRYVLEEMRKEGYKLGGEQSGHIIMLDYNTTGDGLITALQIACIVKKSGRKLSDIASMMKNLPQTLVNAKVPDDKKKIYMEDEEIVLKIKEIERKLHGCGRVLIRPSGTEPLVRVMLEGEEQGEIDKMAHNLAELIEVKLN.

Catalysis depends on Ser-100, which acts as the Phosphoserine intermediate. Residues Ser-100, Asp-241, Asp-243, and Asp-245 each coordinate Mg(2+). Ser-100 carries the post-translational modification Phosphoserine.

Belongs to the phosphohexose mutase family. Requires Mg(2+) as cofactor. Post-translationally, activated by phosphorylation.

It catalyses the reaction alpha-D-glucosamine 1-phosphate = D-glucosamine 6-phosphate. In terms of biological role, catalyzes the conversion of glucosamine-6-phosphate to glucosamine-1-phosphate. The sequence is that of Phosphoglucosamine mutase from Clostridium kluyveri (strain NBRC 12016).